The primary structure comprises 282 residues: Bifunctional protein FolD (282 aa).

Residues 165–167 (GRS), Ser-190, and Thr-231 contribute to the NADP(+) site.

Belongs to the tetrahydrofolate dehydrogenase/cyclohydrolase family. As to quaternary structure, homodimer.

The enzyme catalyses (6R)-5,10-methylene-5,6,7,8-tetrahydrofolate + NADP(+) = (6R)-5,10-methenyltetrahydrofolate + NADPH. It carries out the reaction (6R)-5,10-methenyltetrahydrofolate + H2O = (6R)-10-formyltetrahydrofolate + H(+). It participates in one-carbon metabolism; tetrahydrofolate interconversion. In terms of biological role, catalyzes the oxidation of 5,10-methylenetetrahydrofolate to 5,10-methenyltetrahydrofolate and then the hydrolysis of 5,10-methenyltetrahydrofolate to 10-formyltetrahydrofolate. This Clostridium botulinum (strain Eklund 17B / Type B) protein is Bifunctional protein FolD.